Here is a 533-residue protein sequence, read N- to C-terminus: Glycogen synthase (533 aa).

An ADP-alpha-D-glucose-binding site is contributed by K12. Residues 497–533 (AALARADAASGRRRRAPEQSERLRQERLARQVALASK) are disordered. Residues 512 to 525 (APEQSERLRQERLA) are compositionally biased toward basic and acidic residues.

This sequence belongs to the glycosyltransferase 1 family. Bacterial/plant glycogen synthase subfamily.

The enzyme catalyses [(1-&gt;4)-alpha-D-glucosyl](n) + ADP-alpha-D-glucose = [(1-&gt;4)-alpha-D-glucosyl](n+1) + ADP + H(+). It functions in the pathway glycan biosynthesis; glycogen biosynthesis. Synthesizes alpha-1,4-glucan chains using ADP-glucose. In Burkholderia thailandensis (strain ATCC 700388 / DSM 13276 / CCUG 48851 / CIP 106301 / E264), this protein is Glycogen synthase.